A 125-amino-acid chain; its full sequence is Small ribosomal subunit protein uS13 (125 aa).

The segment at 94-125 (SLPVRGQRTQTNARTRKGKRKTVAGKKKAVKK) is disordered. Over residues 107–125 (RTRKGKRKTVAGKKKAVKK) the composition is skewed to basic residues.

The protein belongs to the universal ribosomal protein uS13 family. As to quaternary structure, part of the 30S ribosomal subunit. Forms a loose heterodimer with protein S19. Forms two bridges to the 50S subunit in the 70S ribosome.

Its function is as follows. Located at the top of the head of the 30S subunit, it contacts several helices of the 16S rRNA. In the 70S ribosome it contacts the 23S rRNA (bridge B1a) and protein L5 of the 50S subunit (bridge B1b), connecting the 2 subunits; these bridges are implicated in subunit movement. Contacts the tRNAs in the A and P-sites. The chain is Small ribosomal subunit protein uS13 from Prosthecochloris aestuarii (strain DSM 271 / SK 413).